Here is an 860-residue protein sequence, read N- to C-terminus: Leucine--tRNA ligase (860 aa).

Positions 42 to 52 match the 'HIGH' region motif; sequence PYPSGRLHMGH. A 'KMSKS' region motif is present at residues 619–623; that stretch reads KMSKS. Lysine 622 contributes to the ATP binding site.

This sequence belongs to the class-I aminoacyl-tRNA synthetase family.

Its subcellular location is the cytoplasm. The enzyme catalyses tRNA(Leu) + L-leucine + ATP = L-leucyl-tRNA(Leu) + AMP + diphosphate. The chain is Leucine--tRNA ligase from Escherichia coli O81 (strain ED1a).